Here is a 202-residue protein sequence, read N- to C-terminus: Endothelin-1 (202 aa).

A signal peptide spans 1–25 (MDYFPMIFALLFVAFQGAPEAAVLG). Residues 26 to 50 (TELSTGAESGGERPVPTTPWRPRRS) constitute a propeptide that is removed on maturation. Residues 29–48 (STGAESGGERPVPTTPWRPR) are disordered. Cystine bridges form between cysteine 53-cysteine 67 and cysteine 55-cysteine 63. Positions 74–202 (VNTPEHVVPY…DKKVIYSRAH (129 aa)) are excised as a propeptide. Residues 110–124 (CQCASQTDKKCQNFC) are endothelin-like.

This sequence belongs to the endothelin/sarafotoxin family.

Its subcellular location is the secreted. Endothelins are endothelium-derived vasoconstrictor peptides. Probable ligand for G-protein coupled receptors EDNRA and EDNRB which activates PTK2B, BCAR1, BCAR3 and, GTPases RAP1 and RHOA cascade in glomerular mesangial cells. Also binds the DEAR/FBXW7-AS1 receptor. Promotes mesenteric arterial wall remodeling via activation of ROCK signaling and subsequent colocalization of NFATC3 with F-actin filaments. NFATC3 then translocates to the nucleus where it subsequently promotes the transcription of the smooth muscle hypertrophy and differentiation marker ACTA2. The polypeptide is Endothelin-1 (EDN1) (Ovis aries (Sheep)).